Consider the following 279-residue polypeptide: Borealin (279 aa).

The segment covering 135-152 (KTKAKVAAKKPSTARKTR) has biased composition (basic residues). The disordered stretch occupies residues 135–180 (KTKAKVAAKKPSTARKTRASTANLTNTSKRTSKRGRATPSASKQIE). Residues 153–163 (ASTANLTNTSK) are compositionally biased toward polar residues.

Belongs to the borealin family. In terms of assembly, component of the CPC at least composed of survivin/birc5, incenp, cdca8/borealin and/or cdca9/dasra-A, and aurkb/aurora-B. Interacts with incenp (via N-terminus).

It localises to the nucleus. The protein resides in the chromosome. It is found in the centromere. The protein localises to the cytoplasm. Its subcellular location is the cytoskeleton. It localises to the spindle. Functionally, component of the chromosomal passenger complex (CPC), a complex that acts as a key regulator of mitosis. The CPC complex has essential functions at the centromere in ensuring correct chromosome alignment and segregation and is required for chromatin-induced microtubule stabilization and spindle assembly. Contributes to CPC function by facilitating loading of the CPC onto chromosomes. The protein is Borealin (cdca8) of Xenopus tropicalis (Western clawed frog).